We begin with the raw amino-acid sequence, 111 residues long: Phosphoribosyl-ATP pyrophosphatase (111 aa).

The protein belongs to the PRA-PH family.

It localises to the cytoplasm. It carries out the reaction 1-(5-phospho-beta-D-ribosyl)-ATP + H2O = 1-(5-phospho-beta-D-ribosyl)-5'-AMP + diphosphate + H(+). The protein operates within amino-acid biosynthesis; L-histidine biosynthesis; L-histidine from 5-phospho-alpha-D-ribose 1-diphosphate: step 2/9. This is Phosphoribosyl-ATP pyrophosphatase from Alcanivorax borkumensis (strain ATCC 700651 / DSM 11573 / NCIMB 13689 / SK2).